Reading from the N-terminus, the 284-residue chain is Pantothenate synthetase (284 aa).

An ATP-binding site is contributed by 30-37 (MGNLHDGH). The Proton donor role is filled by His-37. Gln-61 is a (R)-pantoate binding site. Gln-61 contacts beta-alanine. ATP is bound at residue 149–152 (GEKD). A (R)-pantoate-binding site is contributed by Gln-155. ATP contacts are provided by residues Ile-178 and 186-189 (LSSR).

Belongs to the pantothenate synthetase family. In terms of assembly, homodimer.

It is found in the cytoplasm. The enzyme catalyses (R)-pantoate + beta-alanine + ATP = (R)-pantothenate + AMP + diphosphate + H(+). The protein operates within cofactor biosynthesis; (R)-pantothenate biosynthesis; (R)-pantothenate from (R)-pantoate and beta-alanine: step 1/1. Functionally, catalyzes the condensation of pantoate with beta-alanine in an ATP-dependent reaction via a pantoyl-adenylate intermediate. The protein is Pantothenate synthetase of Salmonella newport (strain SL254).